We begin with the raw amino-acid sequence, 219 residues long: Putative protease Do-like 6, chloroplastic (219 aa).

The transit peptide at 1 to 45 (MLFRSVHHIVARFSNSTSTPIHRFFYSPSLLRRRSSFNASLISRC) directs the protein to the chloroplast. The serine protease stretch occupies residues 61–216 (KIFSFSREPN…YSGQINKKIY (156 aa)). Active-site charge relay system residues include His-99, Asp-130, and Ser-208.

This sequence belongs to the peptidase S1B family.

It is found in the plastid. The protein resides in the chloroplast. Its function is as follows. Putative serine protease. The protein is Putative protease Do-like 6, chloroplastic (DEGP6) of Arabidopsis thaliana (Mouse-ear cress).